The following is a 513-amino-acid chain: ATP synthase subunit alpha (513 aa).

An ATP-binding site is contributed by 169–176 (GDRQIGKT).

Belongs to the ATPase alpha/beta chains family. As to quaternary structure, F-type ATPases have 2 components, CF(1) - the catalytic core - and CF(0) - the membrane proton channel. CF(1) has five subunits: alpha(3), beta(3), gamma(1), delta(1), epsilon(1). CF(0) has three main subunits: a(1), b(2) and c(9-12). The alpha and beta chains form an alternating ring which encloses part of the gamma chain. CF(1) is attached to CF(0) by a central stalk formed by the gamma and epsilon chains, while a peripheral stalk is formed by the delta and b chains.

It is found in the cell inner membrane. It carries out the reaction ATP + H2O + 4 H(+)(in) = ADP + phosphate + 5 H(+)(out). Its function is as follows. Produces ATP from ADP in the presence of a proton gradient across the membrane. The alpha chain is a regulatory subunit. The chain is ATP synthase subunit alpha from Francisella philomiragia subsp. philomiragia (strain ATCC 25017 / CCUG 19701 / FSC 153 / O#319-036).